The chain runs to 377 residues: Nitric oxide reductase FlRd-NAD(+) reductase (377 aa).

It belongs to the FAD-dependent oxidoreductase family. It depends on FAD as a cofactor.

It localises to the cytoplasm. The enzyme catalyses 2 reduced [nitric oxide reductase rubredoxin domain] + NAD(+) + H(+) = 2 oxidized [nitric oxide reductase rubredoxin domain] + NADH. It functions in the pathway nitrogen metabolism; nitric oxide reduction. In terms of biological role, one of at least two accessory proteins for anaerobic nitric oxide (NO) reductase. Reduces the rubredoxin moiety of NO reductase. This is Nitric oxide reductase FlRd-NAD(+) reductase from Salmonella dublin (strain CT_02021853).